An 86-amino-acid chain; its full sequence is UPF0297 protein BBR47_19030 (86 aa).

This sequence belongs to the UPF0297 family.

In Brevibacillus brevis (strain 47 / JCM 6285 / NBRC 100599), this protein is UPF0297 protein BBR47_19030.